The primary structure comprises 203 residues: CASP-like protein 4B2 (203 aa).

Residues 1–57 (MAMVTADASAAADAATKQPDVEKDYSSYNGASTAGAGGGGVVESVVARWRREDMLDK) are Cytoplasmic-facing. Residues 58-78 (CPLALHAAAAAFAFVALVLVA) traverse the membrane as a helical segment. Over 79–92 (SNQHGDWMQFDRYQ) the chain is Extracellular. The helical transmembrane segment at 93-113 (EYMYLLAIAALAFAYSLAQAL) threads the bilayer. Residues 114 to 135 (RHAHRMRGGADPIPAPSARLFD) lie on the Cytoplasmic side of the membrane. Residues 136–156 (FIADQVVAYLLMSALSAAIPI) form a helical membrane-spanning segment. Over 157-171 (TNRMRTAVINNFTDA) the chain is Extracellular. A glycan (N-linked (GlcNAc...) asparagine) is linked at Asn-167. A helical membrane pass occupies residues 172–192 (TAAAISMAFLAFVALALSATV). The Cytoplasmic portion of the chain corresponds to 193-203 (SGYKLSRQMYM).

It belongs to the Casparian strip membrane proteins (CASP) family. In terms of assembly, homodimer and heterodimers.

It localises to the cell membrane. The chain is CASP-like protein 4B2 from Hordeum vulgare subsp. vulgare (Domesticated barley).